Here is a 199-residue protein sequence, read N- to C-terminus: NAD(P)H dehydrogenase (quinone) (199 aa).

The Flavodoxin-like domain maps to 4–190; it reads VLVLYYSTYG…DGARFLGQHV (187 aa). FMN contacts are provided by residues 10 to 15 and 78 to 80; these read STYGHI and TRF. Position 12 (tyrosine 12) interacts with NAD(+). Tryptophan 98 is a substrate binding site. FMN is bound by residues 113–119 and histidine 134; that span reads STATQHG.

Belongs to the WrbA family. The cofactor is FMN.

The enzyme catalyses a quinone + NADH + H(+) = a quinol + NAD(+). The catalysed reaction is a quinone + NADPH + H(+) = a quinol + NADP(+). In Gluconacetobacter diazotrophicus (strain ATCC 49037 / DSM 5601 / CCUG 37298 / CIP 103539 / LMG 7603 / PAl5), this protein is NAD(P)H dehydrogenase (quinone).